The chain runs to 257 residues: Coenzyme F420:L-glutamate ligase (257 aa).

Residues 9 to 12 (VPEV), 38 to 39 (ST), and K43 each bind GTP. Residue D113 coordinates a divalent metal cation. N116 provides a ligand contact to GTP. Positions 154, 155, and 212 each coordinate a divalent metal cation. 210–217 (TGEGDGGT) is a binding site for GTP.

This sequence belongs to the CofE family. Homodimer. Requires Mg(2+) as cofactor. Mn(2+) is required as a cofactor. It depends on K(+) as a cofactor.

The enzyme catalyses oxidized coenzyme F420-0 + GTP + L-glutamate = oxidized coenzyme F420-1 + GDP + phosphate + H(+). It catalyses the reaction oxidized coenzyme F420-1 + GTP + L-glutamate = oxidized coenzyme F420-2 + GDP + phosphate + H(+). The protein operates within cofactor biosynthesis; coenzyme F420 biosynthesis. Catalyzes the GTP-dependent successive addition of two or more gamma-linked L-glutamates to the L-lactyl phosphodiester of 7,8-didemethyl-8-hydroxy-5-deazariboflavin (F420-0) to form coenzyme F420-0-glutamyl-glutamate (F420-2) or polyglutamated F420 derivatives. This chain is Coenzyme F420:L-glutamate ligase, found in Haloarcula marismortui (strain ATCC 43049 / DSM 3752 / JCM 8966 / VKM B-1809) (Halobacterium marismortui).